Consider the following 226-residue polypeptide: ATP-dependent dethiobiotin synthetase BioD (226 aa).

14–19 (GIGKTF) is an ATP binding site. Thr18 contacts Mg(2+). Lys39 is a catalytic residue. Residue Ser43 coordinates substrate. ATP contacts are provided by residues Asp56, 117–120 (EGVG), 177–178 (NT), 206–208 (PHI), and Asn213. Mg(2+)-binding residues include Asp56 and Glu117.

This sequence belongs to the dethiobiotin synthetase family. In terms of assembly, homodimer. The cofactor is Mg(2+).

Its subcellular location is the cytoplasm. It carries out the reaction (7R,8S)-7,8-diammoniononanoate + CO2 + ATP = (4R,5S)-dethiobiotin + ADP + phosphate + 3 H(+). It functions in the pathway cofactor biosynthesis; biotin biosynthesis; biotin from 7,8-diaminononanoate: step 1/2. Functionally, catalyzes a mechanistically unusual reaction, the ATP-dependent insertion of CO2 between the N7 and N8 nitrogen atoms of 7,8-diaminopelargonic acid (DAPA, also called 7,8-diammoniononanoate) to form a ureido ring. The protein is ATP-dependent dethiobiotin synthetase BioD of Xylella fastidiosa (strain Temecula1 / ATCC 700964).